The chain runs to 306 residues: Glycine--tRNA ligase alpha subunit (306 aa).

This sequence belongs to the class-II aminoacyl-tRNA synthetase family. In terms of assembly, tetramer of two alpha and two beta subunits.

It is found in the cytoplasm. It catalyses the reaction tRNA(Gly) + glycine + ATP = glycyl-tRNA(Gly) + AMP + diphosphate. This chain is Glycine--tRNA ligase alpha subunit, found in Aliivibrio fischeri (strain ATCC 700601 / ES114) (Vibrio fischeri).